The sequence spans 495 residues: Maternal protein exuperantia-1 (495 aa).

2 disordered regions span residues 197 to 217 (DESA…SSND) and 377 to 495 (TIKP…AATN). 2 stretches are compositionally biased toward polar residues: residues 207–216 (ENVNRNGSSN) and 398–414 (AASS…TSTE).

In terms of biological role, ensures the proper localization of the mRNA of the bicoid gene to the anterior regions of the oocyte thus playing a fundamental role in the establishment of the polarity of the oocyte. May bind the bcd mRNA. In Drosophila pseudoobscura pseudoobscura (Fruit fly), this protein is Maternal protein exuperantia-1 (exu1).